We begin with the raw amino-acid sequence, 70 residues long: Protein SlyX homolog (70 aa).

The protein belongs to the SlyX family.

In Shewanella woodyi (strain ATCC 51908 / MS32), this protein is Protein SlyX homolog.